The primary structure comprises 310 residues: Methionyl-tRNA formyltransferase (310 aa).

(6S)-5,6,7,8-tetrahydrofolate is bound at residue S111 to P114.

Belongs to the Fmt family.

The enzyme catalyses L-methionyl-tRNA(fMet) + (6R)-10-formyltetrahydrofolate = N-formyl-L-methionyl-tRNA(fMet) + (6S)-5,6,7,8-tetrahydrofolate + H(+). Its function is as follows. Attaches a formyl group to the free amino group of methionyl-tRNA(fMet). The formyl group appears to play a dual role in the initiator identity of N-formylmethionyl-tRNA by promoting its recognition by IF2 and preventing the misappropriation of this tRNA by the elongation apparatus. This chain is Methionyl-tRNA formyltransferase, found in Methylobacterium sp. (strain 4-46).